An 863-amino-acid polypeptide reads, in one-letter code: Bifunctional uridylyltransferase/uridylyl-removing enzyme (863 aa).

Positions 1 to 328 (MLFSPTLSSL…SSNQDTVIDQ (328 aa)) are uridylyltransferase. Positions 329 to 687 (LDDDFQLINQ…ISNRFSLGGT (359 aa)) are uridylyl-removing. The region spanning 446-568 (VDEHTLRVML…MQNQVRLDYL (123 aa)) is the HD domain. ACT domains follow at residues 688-764 (EVFI…KLPA) and 794-863 (EMEL…QQIR).

It belongs to the GlnD family. It depends on Mg(2+) as a cofactor.

It catalyses the reaction [protein-PII]-L-tyrosine + UTP = [protein-PII]-uridylyl-L-tyrosine + diphosphate. The catalysed reaction is [protein-PII]-uridylyl-L-tyrosine + H2O = [protein-PII]-L-tyrosine + UMP + H(+). Uridylyltransferase (UTase) activity is inhibited by glutamine, while glutamine activates uridylyl-removing (UR) activity. Its function is as follows. Modifies, by uridylylation and deuridylylation, the PII regulatory proteins (GlnB and homologs), in response to the nitrogen status of the cell that GlnD senses through the glutamine level. Under low glutamine levels, catalyzes the conversion of the PII proteins and UTP to PII-UMP and PPi, while under higher glutamine levels, GlnD hydrolyzes PII-UMP to PII and UMP (deuridylylation). Thus, controls uridylylation state and activity of the PII proteins, and plays an important role in the regulation of nitrogen assimilation and metabolism. This is Bifunctional uridylyltransferase/uridylyl-removing enzyme from Haemophilus influenzae (strain ATCC 51907 / DSM 11121 / KW20 / Rd).